We begin with the raw amino-acid sequence, 259 residues long: O-antigen export system permease protein RfbA (259 aa).

6 consecutive transmembrane segments (helical) span residues 33-53 (LGYL…YFIF), 73-95 (FPWQ…NAQI), 111-131 (VMME…FLFV), 142-162 (WGIP…SIIF), 176-196 (VSLG…SDMI), and 228-248 (EYIS…LSIF). One can recognise an ABC transmembrane type-2 domain in the interval 33–251 (LGYLWSVANP…VVGLSIFNKL (219 aa)).

It belongs to the ABC-2 integral membrane protein family.

Its subcellular location is the cell inner membrane. In terms of biological role, may form an ATP-driven O-antigen export apparatus, in association with RfbB. In Klebsiella pneumoniae, this protein is O-antigen export system permease protein RfbA (rfbA).